The chain runs to 422 residues: L-threonine dehydratase biosynthetic IlvA (422 aa).

An N6-(pyridoxal phosphate)lysine modification is found at Lys-56. Residues Asn-83, 189 to 193, and Ser-315 each bind pyridoxal 5'-phosphate; that span reads GGGGL. The 75-residue stretch at 339–413 folds into the ACT-like domain; the sequence is HYFILNFPQR…FDPSNIYINE (75 aa).

Belongs to the serine/threonine dehydratase family. In terms of assembly, homotetramer. Pyridoxal 5'-phosphate is required as a cofactor.

It carries out the reaction L-threonine = 2-oxobutanoate + NH4(+). Its pathway is amino-acid biosynthesis; L-isoleucine biosynthesis; 2-oxobutanoate from L-threonine: step 1/1. In terms of biological role, catalyzes the anaerobic formation of alpha-ketobutyrate and ammonia from threonine in a two-step reaction. The first step involved a dehydration of threonine and a production of enamine intermediates (aminocrotonate), which tautomerizes to its imine form (iminobutyrate). Both intermediates are unstable and short-lived. The second step is the nonenzymatic hydrolysis of the enamine/imine intermediates to form 2-ketobutyrate and free ammonia. In the low water environment of the cell, the second step is accelerated by RidA. This is L-threonine dehydratase biosynthetic IlvA (ilvA) from Staphylococcus aureus (strain MSSA476).